A 262-amino-acid chain; its full sequence is Pyridoxine 5'-phosphate synthase (262 aa).

Asn6 provides a ligand contact to 3-amino-2-oxopropyl phosphate. A 1-deoxy-D-xylulose 5-phosphate-binding site is contributed by 8-9 (DH). Residue Arg17 coordinates 3-amino-2-oxopropyl phosphate. The active-site Proton acceptor is the His43. Positions 45 and 50 each coordinate 1-deoxy-D-xylulose 5-phosphate. Glu70 acts as the Proton acceptor in catalysis. Thr102 lines the 1-deoxy-D-xylulose 5-phosphate pocket. His215 serves as the catalytic Proton donor. Residues Gly216 and 237 to 238 (GH) contribute to the 3-amino-2-oxopropyl phosphate site.

The protein belongs to the PNP synthase family. Homooctamer; tetramer of dimers.

Its subcellular location is the cytoplasm. The enzyme catalyses 3-amino-2-oxopropyl phosphate + 1-deoxy-D-xylulose 5-phosphate = pyridoxine 5'-phosphate + phosphate + 2 H2O + H(+). It functions in the pathway cofactor biosynthesis; pyridoxine 5'-phosphate biosynthesis; pyridoxine 5'-phosphate from D-erythrose 4-phosphate: step 5/5. Functionally, catalyzes the complicated ring closure reaction between the two acyclic compounds 1-deoxy-D-xylulose-5-phosphate (DXP) and 3-amino-2-oxopropyl phosphate (1-amino-acetone-3-phosphate or AAP) to form pyridoxine 5'-phosphate (PNP) and inorganic phosphate. This Helicobacter pylori (strain G27) protein is Pyridoxine 5'-phosphate synthase.